Consider the following 380-residue polypeptide: Cytochrome b (380 aa).

Transmembrane regions (helical) follow at residues 34–54, 78–99, 114–134, and 179–199; these read FGSL…LLAA, WLIR…YLHI, WNTG…GYVL, and FFTL…IHLT. Residues H84 and H98 each contribute to the heme b site. 2 residues coordinate heme b: H183 and H197. Residue H202 participates in a ubiquinone binding. Helical transmembrane passes span 227-247, 289-309, 321-341, and 348-368; these read LKDI…ALFS, LGGV…PLLH, FSQL…WVGS, and FIII…ILFP.

This sequence belongs to the cytochrome b family. In terms of assembly, the cytochrome bc1 complex contains 11 subunits: 3 respiratory subunits (MT-CYB, CYC1 and UQCRFS1), 2 core proteins (UQCRC1 and UQCRC2) and 6 low-molecular weight proteins (UQCRH/QCR6, UQCRB/QCR7, UQCRQ/QCR8, UQCR10/QCR9, UQCR11/QCR10 and a cleavage product of UQCRFS1). This cytochrome bc1 complex then forms a dimer. Heme b serves as cofactor.

The protein resides in the mitochondrion inner membrane. Its function is as follows. Component of the ubiquinol-cytochrome c reductase complex (complex III or cytochrome b-c1 complex) that is part of the mitochondrial respiratory chain. The b-c1 complex mediates electron transfer from ubiquinol to cytochrome c. Contributes to the generation of a proton gradient across the mitochondrial membrane that is then used for ATP synthesis. This is Cytochrome b (MT-CYB) from Antigone vipio (White-naped crane).